A 736-amino-acid chain; its full sequence is Subtilisin-like protease SBT4.11 (736 aa).

Residues 1–25 (MAKRGAFSSFHSFLIVLLFLNSVLA) form the signal peptide. The propeptide at 26 to 113 (VTHGHQDKQV…VFPNKKLKLQ (88 aa)) is activation peptide. The 78-residue stretch at 35–112 (VYIVYMGSLP…SVFPNKKLKL (78 aa)) folds into the Inhibitor I9 domain. The region spanning 117–579 (SWDFMGLKEG…AGHVDPIAAT (463 aa)) is the Peptidase S8 domain. Catalysis depends on Asp-145, which acts as the Charge relay system. The N-linked (GlcNAc...) asparagine glycan is linked to Asn-176. The Charge relay system role is filled by His-200. Residues Asn-215 and Asn-223 are each glycosylated (N-linked (GlcNAc...) asparagine). In terms of domain architecture, PA spans 355 to 437 (KFPLVYGKSA…GLQKDDFESV (83 aa)). Ser-518 acts as the Charge relay system in catalysis. N-linked (GlcNAc...) asparagine glycans are attached at residues Asn-555, Asn-602, Asn-638, Asn-646, and Asn-656.

It belongs to the peptidase S8 family. Post-translationally, the C-terminal propeptide is autocleaved.

It localises to the secreted. This Arabidopsis thaliana (Mouse-ear cress) protein is Subtilisin-like protease SBT4.11.